We begin with the raw amino-acid sequence, 105 residues long: Sulfite reductase, dissimilatory-type subunit gamma (105 aa).

It belongs to the DsrC/TusE family. Heterohexamer of two alpha, two beta and two gamma subunits.

The protein localises to the cytoplasm. It catalyses the reaction [DsrC protein]-trisulfide + NAD(+) + 3 H2O = [DsrC protein]-dithiol + sulfite + NADH + 3 H(+). Functionally, catalyzes the reduction of sulfite to sulfide. This is the terminal oxidation reaction in sulfate respiration, a process catalyzed by the sulfate-reducing bacteria. The polypeptide is Sulfite reductase, dissimilatory-type subunit gamma (dsvC) (Nitratidesulfovibrio vulgaris (strain ATCC 29579 / DSM 644 / CCUG 34227 / NCIMB 8303 / VKM B-1760 / Hildenborough) (Desulfovibrio vulgaris)).